Here is a 388-residue protein sequence, read N- to C-terminus: Succinate--CoA ligase [ADP-forming] subunit beta (388 aa).

Positions 9–244 (KDLLSSYDIA…PSQENVRDVL (236 aa)) constitute an ATP-grasp domain. ATP is bound by residues Lys-46, 53 to 55 (GRG), Val-102, and Glu-107. Residues Asn-199 and Asp-213 each contribute to the Mg(2+) site. Substrate-binding positions include Asn-264 and 321-323 (GIM).

It belongs to the succinate/malate CoA ligase beta subunit family. Heterotetramer of two alpha and two beta subunits. The cofactor is Mg(2+).

It carries out the reaction succinate + ATP + CoA = succinyl-CoA + ADP + phosphate. The catalysed reaction is GTP + succinate + CoA = succinyl-CoA + GDP + phosphate. It functions in the pathway carbohydrate metabolism; tricarboxylic acid cycle; succinate from succinyl-CoA (ligase route): step 1/1. In terms of biological role, succinyl-CoA synthetase functions in the citric acid cycle (TCA), coupling the hydrolysis of succinyl-CoA to the synthesis of either ATP or GTP and thus represents the only step of substrate-level phosphorylation in the TCA. The beta subunit provides nucleotide specificity of the enzyme and binds the substrate succinate, while the binding sites for coenzyme A and phosphate are found in the alpha subunit. This chain is Succinate--CoA ligase [ADP-forming] subunit beta, found in Chlamydia felis (strain Fe/C-56) (Chlamydophila felis).